A 542-amino-acid chain; its full sequence is Protein MPA43 (542 aa).

In Saccharomyces cerevisiae (strain ATCC 204508 / S288c) (Baker's yeast), this protein is Protein MPA43 (MPA43).